The chain runs to 350 residues: Holliday junction branch migration complex subunit RuvB (350 aa).

The interval 4–184 (TDRLIAAQPQ…FGIVQRLEFY (181 aa)) is large ATPase domain (RuvB-L). ATP is bound by residues I23, R24, G65, K68, T69, T70, 131 to 133 (EDY), R174, Y184, and R221. A Mg(2+)-binding site is contributed by T69. The small ATPAse domain (RuvB-S) stretch occupies residues 185-255 (AVEELTEIVV…IADQALNMLH (71 aa)). A head domain (RuvB-H) region spans residues 258 to 350 (RHGLDHMDRR…PLTPPGESDA (93 aa)). DNA is bound by residues R294, R313, and R318.

The protein belongs to the RuvB family. In terms of assembly, homohexamer. Forms an RuvA(8)-RuvB(12)-Holliday junction (HJ) complex. HJ DNA is sandwiched between 2 RuvA tetramers; dsDNA enters through RuvA and exits via RuvB. An RuvB hexamer assembles on each DNA strand where it exits the tetramer. Each RuvB hexamer is contacted by two RuvA subunits (via domain III) on 2 adjacent RuvB subunits; this complex drives branch migration. In the full resolvosome a probable DNA-RuvA(4)-RuvB(12)-RuvC(2) complex forms which resolves the HJ.

It is found in the cytoplasm. It catalyses the reaction ATP + H2O = ADP + phosphate + H(+). Functionally, the RuvA-RuvB-RuvC complex processes Holliday junction (HJ) DNA during genetic recombination and DNA repair, while the RuvA-RuvB complex plays an important role in the rescue of blocked DNA replication forks via replication fork reversal (RFR). RuvA specifically binds to HJ cruciform DNA, conferring on it an open structure. The RuvB hexamer acts as an ATP-dependent pump, pulling dsDNA into and through the RuvAB complex. RuvB forms 2 homohexamers on either side of HJ DNA bound by 1 or 2 RuvA tetramers; 4 subunits per hexamer contact DNA at a time. Coordinated motions by a converter formed by DNA-disengaged RuvB subunits stimulates ATP hydrolysis and nucleotide exchange. Immobilization of the converter enables RuvB to convert the ATP-contained energy into a lever motion, pulling 2 nucleotides of DNA out of the RuvA tetramer per ATP hydrolyzed, thus driving DNA branch migration. The RuvB motors rotate together with the DNA substrate, which together with the progressing nucleotide cycle form the mechanistic basis for DNA recombination by continuous HJ branch migration. Branch migration allows RuvC to scan DNA until it finds its consensus sequence, where it cleaves and resolves cruciform DNA. This is Holliday junction branch migration complex subunit RuvB from Chromohalobacter salexigens (strain ATCC BAA-138 / DSM 3043 / CIP 106854 / NCIMB 13768 / 1H11).